A 742-amino-acid chain; its full sequence is 5-methyltetrahydropteroyltriglutamate--homocysteine methyltransferase (742 aa).

Residues 18 to 21 (REWK) and Lys112 contribute to the 5-methyltetrahydropteroyltri-L-glutamate site. L-homocysteine-binding positions include 420–422 (IGS) and Glu473. Residues 420-422 (IGS) and Glu473 each bind L-methionine. Residue Trp550 participates in 5-methyltetrahydropteroyltri-L-glutamate binding. An L-homocysteine-binding site is contributed by Asp588. L-methionine is bound at residue Asp588. Glu594 provides a ligand contact to 5-methyltetrahydropteroyltri-L-glutamate. Zn(2+) is bound by residues His630, Cys632, and Glu654. Residue His683 is the Proton donor of the active site. Cys715 is a binding site for Zn(2+).

It belongs to the vitamin-B12 independent methionine synthase family. Zn(2+) is required as a cofactor.

The enzyme catalyses 5-methyltetrahydropteroyltri-L-glutamate + L-homocysteine = tetrahydropteroyltri-L-glutamate + L-methionine. It functions in the pathway amino-acid biosynthesis; L-methionine biosynthesis via de novo pathway; L-methionine from L-homocysteine (MetE route): step 1/1. Functionally, catalyzes the transfer of a methyl group from 5-methyltetrahydrofolate to homocysteine resulting in methionine formation. In Staphylococcus aureus (strain JH9), this protein is 5-methyltetrahydropteroyltriglutamate--homocysteine methyltransferase.